Consider the following 3351-residue polypeptide: Apolipophorins (3351 aa).

The signal sequence occupies residues 1–25; that stretch reads MARMKYNIALIGILASVLLTIAVNA. Residues 43 to 641 form the Vitellogenin domain; sequence YIPGNYYDYS…SQHGFLPRSS (599 aa). N-linked (GlcNAc...) asparagine glycosylation is found at Asn67, Asn644, Asn1514, Asn1744, Asn1932, Asn1979, and Asn2822. In terms of domain architecture, VWFD spans 2786–2952; that stretch reads LRGHVVDGKH…DYGVGKCTAI (167 aa).

As to quaternary structure, interacts with Nrx-1 (via cytoplasmic domain); the interaction supports apolpp/ApoLI protein stability. Post-translationally, may be modified covalently by lipidation. Cleaved into 2 chains by furin protease. However, prevention of cleavage does not impair its function. As to expression, during stage 12, it is highly present throughout the yolk sac. By late stage 14, it localizes in the lateral fat body cells. Starting at stage 14, it localizes to the apodemes. Component of hemolymph clots (at protein level). Expressed in the amniosera. Expressed in rhabdomere of photoreceptor cells in retina (at protein level). Expressed in rhabdomere of photoreceptor cells in retina (at protein level). In terms of tissue distribution, expressed in simper cells as well as interphotoreceptor matrix (at protein level).

It is found in the secreted. It localises to the cell projection. Its subcellular location is the rhabdomere. In terms of biological role, constitutes the major component of lipophorin, which mediates transport for various types of lipids in hemolymph. Acts by forming lipoprotein particles that bind lipoproteins and lipids. Also involved in the transport of hydrophobic ligands like juvenile hormones, pheromone hydrocarbons and carotenoids. Required for morphogens wingless (wg) and hedgehog (hh) function, probably by acting as vehicles for the movement of wg and hh, explaining how covalently lipidated wg and hh can spread over long distances. May also be involved in transport and/or metabolism of heme. Involved in yolk granule formation. May be a component of yolk incorporated into yolk granules via yl/yolkless-mediated endocytosis and the endolysosomal pathway. This is Apolipophorins from Drosophila melanogaster (Fruit fly).